The sequence spans 341 residues: Paired box protein Pax-9 (341 aa).

The paired DNA-binding region spans 4-130; that stretch reads AFGEVNQLGG…SSISRILRNK (127 aa). Residues 7–63 form a PAI subdomain region; sequence EVNQLGGVFVNGRPLPNAIRLRIVELAQLGIRPCDISRQLRVSHGCVSKILARYNET. Positions 82–130 are RED subdomain; the sequence is TVVKHIRTYKQRDPGIFAWEIRDRLLADGVCDKYNVPSVSSISRILRNK. An interaction with KDM5B region spans residues 168 to 189; that stretch reads AAAAKVPTPPGVPAIPGSVAMP.

In terms of assembly, interacts with KDM5B.

The protein localises to the nucleus. Transcription factor required for normal development of thymus, parathyroid glands, ultimobranchial bodies, teeth, skeletal elements of skull and larynx as well as distal limbs. This chain is Paired box protein Pax-9 (PAX9), found in Perodicticus potto edwarsi (Potto).